Reading from the N-terminus, the 473-residue chain is ATP synthase subunit beta (473 aa).

156-163 contacts ATP; it reads GGAGVGKT.

This sequence belongs to the ATPase alpha/beta chains family. In terms of assembly, F-type ATPases have 2 components, CF(1) - the catalytic core - and CF(0) - the membrane proton channel. CF(1) has five subunits: alpha(3), beta(3), gamma(1), delta(1), epsilon(1). CF(0) has three main subunits: a(1), b(2) and c(9-12). The alpha and beta chains form an alternating ring which encloses part of the gamma chain. CF(1) is attached to CF(0) by a central stalk formed by the gamma and epsilon chains, while a peripheral stalk is formed by the delta and b chains.

Its subcellular location is the cell inner membrane. It carries out the reaction ATP + H2O + 4 H(+)(in) = ADP + phosphate + 5 H(+)(out). In terms of biological role, produces ATP from ADP in the presence of a proton gradient across the membrane. The catalytic sites are hosted primarily by the beta subunits. The polypeptide is ATP synthase subunit beta (Desulfovibrio desulfuricans (strain ATCC 27774 / DSM 6949 / MB)).